Here is a 459-residue protein sequence, read N- to C-terminus: ATP synthase subunit beta (459 aa).

149–156 lines the ATP pocket; it reads GGAGVGKT.

Belongs to the ATPase alpha/beta chains family. In terms of assembly, F-type ATPases have 2 components, CF(1) - the catalytic core - and CF(0) - the membrane proton channel. CF(1) has five subunits: alpha(3), beta(3), gamma(1), delta(1), epsilon(1). CF(0) has three main subunits: a(1), b(2) and c(9-12). The alpha and beta chains form an alternating ring which encloses part of the gamma chain. CF(1) is attached to CF(0) by a central stalk formed by the gamma and epsilon chains, while a peripheral stalk is formed by the delta and b chains.

Its subcellular location is the cell inner membrane. It carries out the reaction ATP + H2O + 4 H(+)(in) = ADP + phosphate + 5 H(+)(out). Produces ATP from ADP in the presence of a proton gradient across the membrane. The catalytic sites are hosted primarily by the beta subunits. The chain is ATP synthase subunit beta from Pseudomonas syringae pv. tomato (strain ATCC BAA-871 / DC3000).